Here is a 224-residue protein sequence, read N- to C-terminus: Biosynthetic peptidoglycan transglycosylase (224 aa).

The chain crosses the membrane as a helical span at residues 12–32 (ILVVLAILPVFLLLVYSLPFV).

Belongs to the glycosyltransferase 51 family.

It is found in the cell inner membrane. It catalyses the reaction [GlcNAc-(1-&gt;4)-Mur2Ac(oyl-L-Ala-gamma-D-Glu-L-Lys-D-Ala-D-Ala)](n)-di-trans,octa-cis-undecaprenyl diphosphate + beta-D-GlcNAc-(1-&gt;4)-Mur2Ac(oyl-L-Ala-gamma-D-Glu-L-Lys-D-Ala-D-Ala)-di-trans,octa-cis-undecaprenyl diphosphate = [GlcNAc-(1-&gt;4)-Mur2Ac(oyl-L-Ala-gamma-D-Glu-L-Lys-D-Ala-D-Ala)](n+1)-di-trans,octa-cis-undecaprenyl diphosphate + di-trans,octa-cis-undecaprenyl diphosphate + H(+). It functions in the pathway cell wall biogenesis; peptidoglycan biosynthesis. In terms of biological role, peptidoglycan polymerase that catalyzes glycan chain elongation from lipid-linked precursors. The polypeptide is Biosynthetic peptidoglycan transglycosylase (Brucella melitensis biotype 1 (strain ATCC 23456 / CCUG 17765 / NCTC 10094 / 16M)).